Consider the following 102-residue polypeptide: Monothiol glutaredoxin-S6 (102 aa).

The Glutaredoxin domain maps to 1–101; that stretch reads MESVRSLVED…AMLRRAGAIW (101 aa). Cys-21 contributes to the [2Fe-2S] cluster binding site.

It belongs to the glutaredoxin family. CC-type subfamily.

The protein localises to the cytoplasm. May only reduce GSH-thiol disulfides, but not protein disulfides. This chain is Monothiol glutaredoxin-S6 (GRXS6), found in Arabidopsis thaliana (Mouse-ear cress).